The sequence spans 369 residues: 3-dehydroquinate synthase (369 aa).

NAD(+) is bound by residues 75–80 (DGEEHK), 109–113 (GVIGD), 133–134 (TT), Lys-146, Lys-155, and 173–176 (TLKT). Glu-188, His-251, and His-268 together coordinate Zn(2+).

This sequence belongs to the sugar phosphate cyclases superfamily. Dehydroquinate synthase family. Requires Co(2+) as cofactor. Zn(2+) is required as a cofactor. NAD(+) serves as cofactor.

Its subcellular location is the cytoplasm. The catalysed reaction is 7-phospho-2-dehydro-3-deoxy-D-arabino-heptonate = 3-dehydroquinate + phosphate. It functions in the pathway metabolic intermediate biosynthesis; chorismate biosynthesis; chorismate from D-erythrose 4-phosphate and phosphoenolpyruvate: step 2/7. Catalyzes the conversion of 3-deoxy-D-arabino-heptulosonate 7-phosphate (DAHP) to dehydroquinate (DHQ). In Legionella pneumophila (strain Lens), this protein is 3-dehydroquinate synthase.